The chain runs to 481 residues: tRNA:m(4)X modification enzyme TRM13 homolog (481 aa).

A CHHC U11-48K-type zinc finger spans residues 56–83; it reads RILCPLDPKHTVYEDQLAKHLKKCNSRE. Zn(2+)-binding residues include C59, H65, H75, and C79. The stretch at 113 to 140 forms a coiled coil; that stretch reads SLSEEQLENLIKKLRKASEGLNSTHEDH. Disordered stretches follow at residues 296–319 and 379–414; these read AKRI…SEKD and LEGS…TDSL. Basic and acidic residues predominate over residues 385–407; that stretch reads TPERKDAQRDENEEHDDGGDRLT.

It belongs to the methyltransferase TRM13 family.

It carries out the reaction cytidine(4) in tRNA(Pro) + S-adenosyl-L-methionine = 2'-O-methylcytidine(4) in tRNA(Pro) + S-adenosyl-L-homocysteine + H(+). It catalyses the reaction cytidine(4) in tRNA(Gly)(GCC) + S-adenosyl-L-methionine = 2'-O-methylcytidine(4) in tRNA(Gly)(GCC) + S-adenosyl-L-homocysteine + H(+). The enzyme catalyses adenosine(4) in tRNA(His) + S-adenosyl-L-methionine = 2'-O-methyladenosine(4) in tRNA(His) + S-adenosyl-L-homocysteine + H(+). TRNA methylase which 2'-O-methylates cytidine(4) in tRNA(Pro) and tRNA(Gly)(GCC), and adenosine(4) in tRNA(His). This is tRNA:m(4)X modification enzyme TRM13 homolog (Trmt13) from Mus musculus (Mouse).